The sequence spans 330 residues: Malate dehydrogenase (330 aa).

12 to 18 (GAAGQIG) is a binding site for NAD(+). Residues R93 and R99 each contribute to the substrate site. Residues N106, Q113, and 130 to 132 (VGN) contribute to the NAD(+) site. Residues N132 and R163 each coordinate substrate. The Proton acceptor role is filled by H188.

The protein belongs to the LDH/MDH superfamily. MDH type 2 family.

The catalysed reaction is (S)-malate + NAD(+) = oxaloacetate + NADH + H(+). In terms of biological role, catalyzes the reversible oxidation of malate to oxaloacetate. The polypeptide is Malate dehydrogenase (Legionella pneumophila (strain Lens)).